The chain runs to 387 residues: Succinate--CoA ligase [ADP-forming] subunit beta (387 aa).

Residues 9-236 (RDLFESYGVP…AAAADPLEAK (228 aa)) enclose the ATP-grasp domain. Residues K45, 52–54 (GRG), A94, and E99 each bind ATP. Mg(2+) contacts are provided by N191 and D205. Substrate is bound by residues N256 and 318–320 (GIT).

The protein belongs to the succinate/malate CoA ligase beta subunit family. In terms of assembly, heterotetramer of two alpha and two beta subunits. The cofactor is Mg(2+).

The enzyme catalyses succinate + ATP + CoA = succinyl-CoA + ADP + phosphate. It carries out the reaction GTP + succinate + CoA = succinyl-CoA + GDP + phosphate. The protein operates within carbohydrate metabolism; tricarboxylic acid cycle; succinate from succinyl-CoA (ligase route): step 1/1. In terms of biological role, succinyl-CoA synthetase functions in the citric acid cycle (TCA), coupling the hydrolysis of succinyl-CoA to the synthesis of either ATP or GTP and thus represents the only step of substrate-level phosphorylation in the TCA. The beta subunit provides nucleotide specificity of the enzyme and binds the substrate succinate, while the binding sites for coenzyme A and phosphate are found in the alpha subunit. The sequence is that of Succinate--CoA ligase [ADP-forming] subunit beta from Clavibacter michiganensis subsp. michiganensis (strain NCPPB 382).